The chain runs to 400 residues: Vitamin K-dependent protein Z (400 aa).

The signal sequence occupies residues 1–23; that stretch reads MAGCVPLLQGLVLVLALHRVEPS. Residues 24–40 constitute a propeptide that is removed on maturation; that stretch reads VFLPASKANDVLVRWKR. Residues 41-86 enclose the Gla domain; it reads AGSYLLEELFEGNLEKECYEEICVYEEAREVFENEVVTDEFWRRYK. 4-carboxyglutamate occurs at positions 47, 48, 51, 55, 57, 60, 61, 66, 67, 70, 73, 75, and 80. Cysteine 58 and cysteine 63 form a disulfide bridge. 2 EGF-like domains span residues 87-123 and 125-166; these read GGSP…SNCE and AKNE…KQCV. 7 disulfides stabilise this stretch: cysteine 91–cysteine 102, cysteine 96–cysteine 111, cysteine 113–cysteine 122, cysteine 129–cysteine 141, cysteine 137–cysteine 150, cysteine 152–cysteine 165, and cysteine 203–cysteine 219. A glycan (O-linked (Glc...) serine) is linked at serine 93. N-linked (GlcNAc...) asparagine glycosylation is present at asparagine 99. Aspartate 104 carries the (3R)-3-hydroxyaspartate modification. The Peptidase S1 domain occupies 175 to 400; the sequence is VLTSEKRAPD…YSLWFKQIMN (226 aa). Residues asparagine 225, asparagine 233, asparagine 306, and asparagine 332 are each glycosylated (N-linked (GlcNAc...) asparagine). A disulfide bridge links cysteine 327 with cysteine 341.

This sequence belongs to the peptidase S1 family. As to quaternary structure, interacts with SERPINA10. Post-translationally, the iron and 2-oxoglutarate dependent 3-hydroxylation of aspartate and asparagine is (R) stereospecific within EGF domains. Plasma.

Its subcellular location is the secreted. In terms of biological role, appears to assist hemostasis by binding thrombin and promoting its association with phospholipid vesicles. Inhibits activity of the coagulation protease factor Xa in the presence of SERPINA10, calcium and phospholipids. The sequence is that of Vitamin K-dependent protein Z (PROZ) from Homo sapiens (Human).